The chain runs to 522 residues: FAD-dependent monooxygenase fsr3 (522 aa).

The disordered stretch occupies residues 1–27 (MKNTQTNGTHPIIDKKPNGTLNGDHQE). FAD is bound at residue arginine 164. The active site involves arginine 245. Positions 369 and 382 each coordinate FAD.

This sequence belongs to the paxM FAD-dependent monooxygenase family. FAD serves as cofactor.

It participates in polyketide biosynthesis. In terms of biological role, FAD-dependent monooxygenase; part of the gene cluster that mediates the biosynthesis of fusarubins, highly pigmented naphthoquinones responsible for the coloration of the fruiting bodies. The non-reducing polyketide synthase FSR1 is responsible for the condensation of seven acetyl-CoA units to yield a haptaketide. After rings A and B are formed by aldol-type cyclization, the PKS-derived product is released as 6-O-demethylfusarubinaldehyde. Then, two hydroxyl groups at C-5 and C-10 are incorporated by FSR3, and simultaneously hydroxyl groups at C-6 and C-8 are methylated by FSR2. The aldehyde is, on the one hand, reduced by FSR3 to 8-O-methylfusarubin alcohol, which equilibrates mainly with 8-O-methylfusarubin and only small amounts of 8-O-methylnectriafurone. On the other hand, the aldehyde can be oxidized to form 8-O-methylfusarubinic acid, a reaction driven by FSR3 equilibrating with 8-O-methylfusarubinlactone, finally resulting in 8-O-methylanhydrofusarubinlactol after a further reduction step and loss of water. 8-O-Methylfusarubinic acid can also undergo decarboxylation, resulting in 8-O-methyl-13-hydroxynorjavanicin after another hydroxylation step at C-13. Both steps are most likely also accomplished by FSR3. No enzymatic function has been determined so far for either FSR4 and FSR5. Their deletion does not alter the product spectrum, but the possibility that they catalyze specific enzymatic steps during perithecium development cannot be ruled out. FSR4 might possess a regulatory function in the biosynthesis of fusarubins. This Gibberella fujikuroi (strain CBS 195.34 / IMI 58289 / NRRL A-6831) (Bakanae and foot rot disease fungus) protein is FAD-dependent monooxygenase fsr3.